Reading from the N-terminus, the 25-residue chain is GLWSKIKEAAKTAGKAAMGFVDEMV.

Position 25 is a valine amide (Val25).

Expressed by the skin glands.

The protein resides in the secreted. In terms of biological role, has antimicrobial activity. The protein is Dermaseptin-5.2TR of Phyllomedusa trinitatis (Trinidad leaf frog).